The following is a 1315-amino-acid chain: Tetratricopeptide repeat protein 21B (1315 aa).

TPR repeat units follow at residues 108-141 (RKALYHAGLFLWHIGRHDKAREYIDRMSKMPHDS), 145-178 (PILKAWLDITRGKEPYAKKALRYFEEGLQDGNDI), 192-225 (QNYSGALETVSQIIVNFPSFLPAFEKKMKLQLAL), 285-323 (AQLFYKITLAFSRTCGRNQLILQKVQSFLEKAFSLTPQQ), 324-357 (AEIATELGYQMILQGKVKEAWKWYRTAMTLNESN), 492-525 (PQAVFLMAKVKYLSGDTEAAYNNLQHCLEHSPSY), 563-596 (PLYHLIKAQSQKKMGEVAEAIKTLHMAMNLPGMR), 616-649 (LSIFLELVEVHRLNGEQHEAAKVLQDAIHEFSGT), 721-754 (PRSFLLLGDAYMNIQEPEEAIVAYEQALNQNPKD), 756-788 (TLARKIGKALVKTHNYSKAITYYEAALKSGQQN), 790-821 (LCYDLAELLLRLKLYEKAEKVLQHSLAHEPVS), 830-863 (GRSQVLLAKVYSKMERPSDAIAALQQARELQARI), 883-916 (AEICAEIAKHSAAQRDYEKAITFYREALVHCETD), 918-950 (KIMLELAQLYLAQEDLDASLRHCALLLQRDQDN), 951-984 (EPATMLMADLMFRKQDYEQAVYHLQQLLDRKPDN), 1022-1055 (PGFQYCKGLHFWYTGEPNDALRHFNKARKDSDWG), 1196-1229 (EKSWLLLADIYIQSAKYDMAEELLKRCLCHNRSC), 1231-1263 (KAYEYMGYIMEKEQAYTDAAFNYEMAWKHSNQT), and 1265-1298 (PAVGYKLAFNYLKAKRYVDAIDVCHQVLEAHPTY).

The protein belongs to the TTC21 family. In terms of assembly, component of the IFT complex A (IFT-A) complex. IFT-A complex is divided into a core subcomplex composed of IFT122:IFT140:WDR19 which is associated with TULP3 and a peripheral subcomplex composed of IFT43:WDR35:TTC21B. Interacts directy with WDR35 and TTC21B. Interacts with TTC25.

The protein localises to the cytoplasm. It localises to the cytoskeleton. The protein resides in the cilium axoneme. Its function is as follows. Component of the IFT complex A (IFT-A), a complex required for retrograde ciliary transport and entry into cilia of G protein-coupled receptors (GPCRs). Essential for retrograde trafficking of IFT-1, IFT-B and GPCRs. Negatively modulates the SHH signal transduction. This chain is Tetratricopeptide repeat protein 21B (Ttc21b), found in Mus musculus (Mouse).